The chain runs to 213 residues: Uridine kinase (213 aa).

Position 15–22 (15–22 (GGSGSGKT)) interacts with ATP.

It belongs to the uridine kinase family.

It is found in the cytoplasm. The enzyme catalyses uridine + ATP = UMP + ADP + H(+). It catalyses the reaction cytidine + ATP = CMP + ADP + H(+). It functions in the pathway pyrimidine metabolism; CTP biosynthesis via salvage pathway; CTP from cytidine: step 1/3. The protein operates within pyrimidine metabolism; UMP biosynthesis via salvage pathway; UMP from uridine: step 1/1. The polypeptide is Uridine kinase (Ligilactobacillus salivarius (strain UCC118) (Lactobacillus salivarius)).